Consider the following 216-residue polypeptide: Thiopurine S-methyltransferase (216 aa).

Residues W10, L45, E66, and R123 each contribute to the S-adenosyl-L-methionine site.

This sequence belongs to the class I-like SAM-binding methyltransferase superfamily. TPMT family.

Its subcellular location is the cytoplasm. It carries out the reaction S-adenosyl-L-methionine + a thiopurine = S-adenosyl-L-homocysteine + a thiopurine S-methylether.. The chain is Thiopurine S-methyltransferase from Pseudomonas putida (strain GB-1).